The following is a 349-amino-acid chain: Replication-associated protein (349 aa).

Residues 9 to 117 (QIAAKNYFLT…DGDTIEWGEF (109 aa)) enclose the CRESS-DNA virus Rep endonuclease domain. An RCR-1 motif is present at residues 16 to 19 (FLTY). Residues glutamate 50, histidine 58, and histidine 60 each coordinate a divalent metal cation. The RCR-2 signature appears at 58–60 (HLH). Tyrosine 104 serves as the catalytic For DNA cleavage activity. The short motif at 104-107 (YVDK) is the RCR-3 element. An a divalent metal cation-binding site is contributed by aspartate 108. A binding to RBR1 region spans residues 144–154 (KEEALQIIKEK). The tract at residues 157–177 (KDFLFCYHNLVSNLDRIFTPA) is oligomerization. Position 223–230 (223–230 (GESRTGKT)) interacts with ATP.

This sequence belongs to the geminiviridae Rep protein family. As to quaternary structure, homooligomer. Interacts with the replication enhancer protein (REn). Interacts with host retinoblastoma-related protein 1 (RBR1), and may thereby induce the transcription of host replicative enzymes even if the cell is not dividing anymore. Interacts with host PCNA. Interacts with host SCE1 protein. Mg(2+) serves as cofactor. Mn(2+) is required as a cofactor.

The protein resides in the host nucleus. Functionally, essential for the replication of viral ssDNA. The closed circular ssDNA genome is first converted to a superhelical dsDNA. Rep binds a specific region at the genome origin of replication. It introduces an endonucleolytic nick within the conserved sequence 5'-TAATATTAC-3' in the intergenic region of the genome present in all geminiviruses, thereby initiating the rolling circle replication (RCR). Following cleavage, binds covalently to the 5'-phosphate of DNA as a tyrosyl ester. The cleavage gives rise to a free 3'-OH that serves as a primer for the cellular DNA polymerase. The polymerase synthesizes the (+) strand DNA by rolling circle mechanism. After one round of replication, a Rep-catalyzed nucleotidyl transfer reaction releases a circular single-stranded virus genome, thereby terminating the replication. Displays origin-specific DNA cleavage, nucleotidyl transferase, ATPase and helicase activities. The polypeptide is Replication-associated protein (Solanum lycopersicum (Tomato)).